We begin with the raw amino-acid sequence, 344 residues long: Treponemal membrane protein A (344 aa).

An N-terminal signal peptide occupies residues 1–21 (MKLKSLVFSLSALFLVLGFTG). Residue C22 is the site of N-palmitoyl cysteine attachment. C22 carries the S-diacylglycerol cysteine lipid modification. A disordered region spans residues 257 to 344 (AAKTKQELSA…TEEPIEGGVQ (88 aa)). Basic and acidic residues predominate over residues 260 to 277 (TKQELSAKLANEADKESP). Acidic residues-rich tracts occupy residues 312 to 322 (VPVEEMNENSS) and 335 to 344 (TEEPIEGGVQ).

The protein to T.pallidum TmpA.

It localises to the cell membrane. In Treponema phagedenis, this protein is Treponemal membrane protein A (tmpA).